We begin with the raw amino-acid sequence, 84 residues long: Exodeoxyribonuclease 7 small subunit (84 aa).

The tract at residues 65 to 84 is disordered; sequence QEGDWTTSPFEPASGEPPGG.

It belongs to the XseB family. Heterooligomer composed of large and small subunits.

The protein localises to the cytoplasm. It catalyses the reaction Exonucleolytic cleavage in either 5'- to 3'- or 3'- to 5'-direction to yield nucleoside 5'-phosphates.. In terms of biological role, bidirectionally degrades single-stranded DNA into large acid-insoluble oligonucleotides, which are then degraded further into small acid-soluble oligonucleotides. The polypeptide is Exodeoxyribonuclease 7 small subunit (Syntrophobacter fumaroxidans (strain DSM 10017 / MPOB)).